Consider the following 156-residue polypeptide: Small ribosomal subunit protein uS7 (156 aa).

This sequence belongs to the universal ribosomal protein uS7 family. Part of the 30S ribosomal subunit. Contacts proteins S9 and S11.

Its function is as follows. One of the primary rRNA binding proteins, it binds directly to 16S rRNA where it nucleates assembly of the head domain of the 30S subunit. Is located at the subunit interface close to the decoding center, probably blocks exit of the E-site tRNA. This Pseudomonas syringae pv. syringae (strain B728a) protein is Small ribosomal subunit protein uS7.